We begin with the raw amino-acid sequence, 297 residues long: MPELPEVETVRRGLEPALVGACFSHVHLARPDLRFPLPERFAARLTGQRVEALSRRAKYLVADLSSGEALIMHLGMSGRFDVVLPDGRQVSPGDFYLEGAGARAKHDHVSFALSNGARVTYNDVRRFGFMDLVPAAELATCRHFAGMGIEPLGNELSGEAVARLFRGRRTPLKAALLDQRLIAGLGNIYVCEALHRARLHPETPAGALADAAGRPTKAARLLAEVIRDVLTEAVAAGGSTLRDYVHTDGTKGAFQHAFRVYDREGLACTARGCRGVVRRVVQSGRSTFFCEVCQPAR.

Pro2 (schiff-base intermediate with DNA) is an active-site residue. The active-site Proton donor is Glu3. The active-site Proton donor; for beta-elimination activity is Lys58. The DNA site is built by His106, Arg125, and Arg168. Residues Arg259 to Pro295 form an FPG-type zinc finger. Arg285 acts as the Proton donor; for delta-elimination activity in catalysis.

It belongs to the FPG family. Monomer. It depends on Zn(2+) as a cofactor.

It catalyses the reaction Hydrolysis of DNA containing ring-opened 7-methylguanine residues, releasing 2,6-diamino-4-hydroxy-5-(N-methyl)formamidopyrimidine.. It carries out the reaction 2'-deoxyribonucleotide-(2'-deoxyribose 5'-phosphate)-2'-deoxyribonucleotide-DNA = a 3'-end 2'-deoxyribonucleotide-(2,3-dehydro-2,3-deoxyribose 5'-phosphate)-DNA + a 5'-end 5'-phospho-2'-deoxyribonucleoside-DNA + H(+). Functionally, involved in base excision repair of DNA damaged by oxidation or by mutagenic agents. Acts as a DNA glycosylase that recognizes and removes damaged bases. Has a preference for oxidized purines, such as 7,8-dihydro-8-oxoguanine (8-oxoG). Has AP (apurinic/apyrimidinic) lyase activity and introduces nicks in the DNA strand. Cleaves the DNA backbone by beta-delta elimination to generate a single-strand break at the site of the removed base with both 3'- and 5'-phosphates. The sequence is that of Formamidopyrimidine-DNA glycosylase from Methylobacterium nodulans (strain LMG 21967 / CNCM I-2342 / ORS 2060).